Consider the following 179-residue polypeptide: Large ribosomal subunit protein uL6 (179 aa).

It belongs to the universal ribosomal protein uL6 family. Part of the 50S ribosomal subunit.

This protein binds to the 23S rRNA, and is important in its secondary structure. It is located near the subunit interface in the base of the L7/L12 stalk, and near the tRNA binding site of the peptidyltransferase center. This is Large ribosomal subunit protein uL6 from Fructilactobacillus sanfranciscensis (Lactobacillus sanfranciscensis).